Reading from the N-terminus, the 962-residue chain is MYQIPVKNLTKLRRPRKRVKSILCDIGMQQCQDMLETYKCFDAGDASFDNTEWDDFTDGHVGKKKKKYPYRSQSLCCSLCWYSSRSVPTFRSHIHRCHWKNLDGACLLMCPYCPFVSSPKVTEQHIQFFHMLPSRAHQSHPSHTLAHTPKTISVTVSADAADDRYTCATCGYHDSLLYVMKKHVLVNHFATLLDRYFGLGSESAPMAGPQIRDGTPVKYHCKLCKLPAETIEHLLYHILSSEKHKELHWQIMPCIIEKECMNQMVGLQNLLNLAPKSMQPVTLFARPNYMPQQTQQTNGNGTVLLAGPSNAAALFCSPGAGQMFLSPQTQALLSGTTVAALQNAPHPQSPGGMSQVLPTSPVVKPLNMVMPNMPQNTPKTLPLTMTVPRLPPPQQGPQVLLPPGVQVNLPGEMGVHSPFLVTQGLQLNQSVPRAPLITSQSVRFIPTGNKVNGVPTYTLAPVQVTVPVHGGPPQMVLAQNQISQPPNSAVVTPGLMPPVQRAMNKNSRPNELAVQAPFLKKHDNQTVKCLRCKILLTEQGIFQHLLHGLKCLFCPQMFYSFKQIMEHSKKEHSLKVKDNRLYIKEQFSLDCDDEGNLIFSTFNLNTDVPKDLLDNRELNLALVTSTKDKIYIKMYPDKAEYTTMLKSAPNACPFCQVKLQNPEDYELHLQTKHHIVPTIHAILKTPAYKCIYCFGVYTEKSTPKTISIHVQRCRCAPKAVKEAERKLNPDTSESHDGDVCSSVQMPASEVTFQGAPEFPKPKKEAVTPRNRRRNTKASKTGTLVPETPVTLVLEPMGMERTSFEDRKDFLSQYFHRKPYVTKTEIELLASRLWINKADVKAHFNSKLTKCLKAIQKKRVCVRLGFKMIEVNKLKHNLFIPEVKPVKRKDPNEVNLSSLVPGVTVKTEQVDATTQHPLFIPEVPVTIKKEEEVCEIDHGFIIQEVTVKQEEVDEMEDALCTNG.

A C2H2-type 1 zinc finger spans residues 75–98; that stretch reads LCCSLCWYSSRSVPTFRSHIHRCH. Residues 108-130 form a C2H2-type 2; degenerate zinc finger; it reads LMCPYCPFVSSPKVTEQHIQFFH. The C2H2-type 3; degenerate zinc finger occupies 165 to 188; sequence YTCATCGYHDSLLYVMKKHVLVNH. Residues 219-244 form a C2H2-type 4 zinc finger; the sequence is YHCKLCKLPAETIEHLLYHILSSEKH. A C2H2-type 5; degenerate zinc finger spans residues 527–547; sequence VKCLRCKILLTEQGIFQHLLH. 2 C2H2-type zinc fingers span residues 549-572 and 650-673; these read LKCLFCPQMFYSFKQIMEHSKKEH and NACPFCQVKLQNPEDYELHLQTKH. The C2H2-type 8; degenerate zinc finger occupies 688-712; sequence YKCIYCFGVYTEKSTPKTISIHVQR. The segment at 753 to 781 is disordered; that stretch reads QGAPEFPKPKKEAVTPRNRRRNTKASKTG. The homeobox DNA-binding region spans 795-854; it reads PMGMERTSFEDRKDFLSQYFHRKPYVTKTEIELLASRLWINKADVKAHFNSKLTKCLKAI.

The protein resides in the nucleus. Functionally, may be involved in transcriptional regulation. Required for progression through late erythroid differentiation. May be involved in vasculogenesis. This is Activity-dependent neuroprotective protein 2a from Danio rerio (Zebrafish).